The sequence spans 496 residues: Cyclin-L1 (496 aa).

Cyclin-like regions lie at residues 68–170 (ELIQ…RILK) and 183–267 (KIIV…TTLR). The interval 301-496 (NPDGTPAILS…SHSGHGRHRR (196 aa)) is disordered. A compositionally biased stretch (basic and acidic residues) spans 322–347 (SPRDVKTEEKSPNFAKVKREMDDKQS). 4 stretches are compositionally biased toward basic residues: residues 358–392 (ENKRSRSVSRSRSRTKSRSRSHSPRRHYNNRRRSR), 412–426 (RRHHNHGSPHMKLKH), 434–446 (RHAHKRKKSHSPS), and 456–468 (KKHRHEHGHHRER). Positions 363–406 (RSVSRSRSRTKSRSRSHSPRRHYNNRRRSRSGTYSSRSRSRSRS) are RS. Over residues 469 to 478 (RERSRSFERS) the composition is skewed to basic and acidic residues. Residues 479 to 496 (HKNKHHGSSHSGHGRHRR) are compositionally biased toward basic residues.

It belongs to the cyclin family. Cyclin L subfamily.

It is found in the nucleus speckle. The protein resides in the nucleus. It localises to the nucleoplasm. Its function is as follows. Involved in pre-mRNA splicing. In Xenopus laevis (African clawed frog), this protein is Cyclin-L1 (ccnl1).